The sequence spans 264 residues: Thiazole synthase (264 aa).

Lys-106 serves as the catalytic Schiff-base intermediate with DXP. 1-deoxy-D-xylulose 5-phosphate is bound by residues Gly-167, 193–194 (AG), and 215–216 (NT).

It belongs to the ThiG family. As to quaternary structure, homotetramer. Forms heterodimers with either ThiH or ThiS.

Its subcellular location is the cytoplasm. The enzyme catalyses [ThiS sulfur-carrier protein]-C-terminal-Gly-aminoethanethioate + 2-iminoacetate + 1-deoxy-D-xylulose 5-phosphate = [ThiS sulfur-carrier protein]-C-terminal Gly-Gly + 2-[(2R,5Z)-2-carboxy-4-methylthiazol-5(2H)-ylidene]ethyl phosphate + 2 H2O + H(+). It participates in cofactor biosynthesis; thiamine diphosphate biosynthesis. Catalyzes the rearrangement of 1-deoxy-D-xylulose 5-phosphate (DXP) to produce the thiazole phosphate moiety of thiamine. Sulfur is provided by the thiocarboxylate moiety of the carrier protein ThiS. In vitro, sulfur can be provided by H(2)S. The chain is Thiazole synthase from Xylella fastidiosa (strain 9a5c).